Consider the following 208-residue polypeptide: FMN-dependent NADH:quinone oxidoreductase (208 aa).

Residues Ser-10, 16–18 (SVS), 94–97 (MYNF), and 138–141 (SRGG) each bind FMN.

It belongs to the azoreductase type 1 family. As to quaternary structure, homodimer. It depends on FMN as a cofactor.

The enzyme catalyses 2 a quinone + NADH + H(+) = 2 a 1,4-benzosemiquinone + NAD(+). It carries out the reaction N,N-dimethyl-1,4-phenylenediamine + anthranilate + 2 NAD(+) = 2-(4-dimethylaminophenyl)diazenylbenzoate + 2 NADH + 2 H(+). Quinone reductase that provides resistance to thiol-specific stress caused by electrophilic quinones. Its function is as follows. Also exhibits azoreductase activity. Catalyzes the reductive cleavage of the azo bond in aromatic azo compounds to the corresponding amines. The chain is FMN-dependent NADH:quinone oxidoreductase from Hyphomonas neptunium (strain ATCC 15444).